Consider the following 308-residue polypeptide: Ribosomal RNA small subunit methyltransferase H (308 aa).

Residues 36 to 38 (GGH), aspartate 55, phenylalanine 86, aspartate 103, and glutamine 110 each bind S-adenosyl-L-methionine.

This sequence belongs to the methyltransferase superfamily. RsmH family.

The protein resides in the cytoplasm. It carries out the reaction cytidine(1402) in 16S rRNA + S-adenosyl-L-methionine = N(4)-methylcytidine(1402) in 16S rRNA + S-adenosyl-L-homocysteine + H(+). Its function is as follows. Specifically methylates the N4 position of cytidine in position 1402 (C1402) of 16S rRNA. This chain is Ribosomal RNA small subunit methyltransferase H, found in Helicobacter pylori (strain Shi470).